The sequence spans 231 residues: UPF0758 protein YsxA (231 aa).

An MPN domain is found at 109–231 (VIRSPEDGAN…FVSLKEKGYL (123 aa)). Positions 180, 182, and 193 each coordinate Zn(2+). The short motif at 180–193 (HNHPSGDPTPSRED) is the JAMM motif element.

This sequence belongs to the UPF0758 family.

This chain is UPF0758 protein YsxA (ysxA), found in Bacillus subtilis (strain 168).